The chain runs to 281 residues: 4-hydroxy-3-methylbut-2-enyl diphosphate reductase (281 aa).

C12 provides a ligand contact to [4Fe-4S] cluster. (2E)-4-hydroxy-3-methylbut-2-enyl diphosphate is bound by residues H41 and H74. Dimethylallyl diphosphate is bound by residues H41 and H74. H41 and H74 together coordinate isopentenyl diphosphate. A [4Fe-4S] cluster-binding site is contributed by C96. H124 serves as a coordination point for (2E)-4-hydroxy-3-methylbut-2-enyl diphosphate. Residue H124 coordinates dimethylallyl diphosphate. H124 serves as a coordination point for isopentenyl diphosphate. E126 (proton donor) is an active-site residue. T164 lines the (2E)-4-hydroxy-3-methylbut-2-enyl diphosphate pocket. C193 provides a ligand contact to [4Fe-4S] cluster. The (2E)-4-hydroxy-3-methylbut-2-enyl diphosphate site is built by S221, N223, and S265. Residues S221, N223, and S265 each contribute to the dimethylallyl diphosphate site. 3 residues coordinate isopentenyl diphosphate: S221, N223, and S265.

It belongs to the IspH family. It depends on [4Fe-4S] cluster as a cofactor.

It catalyses the reaction isopentenyl diphosphate + 2 oxidized [2Fe-2S]-[ferredoxin] + H2O = (2E)-4-hydroxy-3-methylbut-2-enyl diphosphate + 2 reduced [2Fe-2S]-[ferredoxin] + 2 H(+). The catalysed reaction is dimethylallyl diphosphate + 2 oxidized [2Fe-2S]-[ferredoxin] + H2O = (2E)-4-hydroxy-3-methylbut-2-enyl diphosphate + 2 reduced [2Fe-2S]-[ferredoxin] + 2 H(+). The protein operates within isoprenoid biosynthesis; dimethylallyl diphosphate biosynthesis; dimethylallyl diphosphate from (2E)-4-hydroxy-3-methylbutenyl diphosphate: step 1/1. Its pathway is isoprenoid biosynthesis; isopentenyl diphosphate biosynthesis via DXP pathway; isopentenyl diphosphate from 1-deoxy-D-xylulose 5-phosphate: step 6/6. In terms of biological role, catalyzes the conversion of 1-hydroxy-2-methyl-2-(E)-butenyl 4-diphosphate (HMBPP) into a mixture of isopentenyl diphosphate (IPP) and dimethylallyl diphosphate (DMAPP). Acts in the terminal step of the DOXP/MEP pathway for isoprenoid precursor biosynthesis. The polypeptide is 4-hydroxy-3-methylbut-2-enyl diphosphate reductase (Nitratidesulfovibrio vulgaris (strain DSM 19637 / Miyazaki F) (Desulfovibrio vulgaris)).